The primary structure comprises 275 residues: Protein FAM210A (275 aa).

The disordered stretch occupies residues 68 to 108 (SSQPADTPRKVPEEREPLTSATEVPKQSPVESDASDPDPLQ). Residues 74–84 (TPRKVPEEREP) are compositionally biased toward basic and acidic residues. In terms of domain architecture, DUF1279 spans 109–221 (DKSISLVQRF…GYMSTPPPVK (113 aa)). A helical transmembrane segment spans residues 128–148 (VMIPVHLVTSTVWFGSFYYAA). Residues 221 to 271 (KEYLQDRMEETKDKITEKMEETKDKITEKMEETKDKITEKIQETKDKVSFK) are a coiled coil.

It belongs to the FAM210 family. As to quaternary structure, interacts with ATAD3A.

The protein resides in the membrane. Its subcellular location is the mitochondrion. It is found in the cytoplasm. Functionally, may play a role in the structure and strength of both muscle and bone. The chain is Protein FAM210A (FAM210A) from Gallus gallus (Chicken).